The sequence spans 639 residues: Threonine--tRNA ligase (639 aa).

A TGS domain is found at 1–61; it reads MIHITLPDGS…TQDSPLSIVT (61 aa). The interval 242–533 is catalytic; sequence DHRKLGRELD…LIEEHAGALP (292 aa). Zn(2+) contacts are provided by Cys333, His384, and His510.

It belongs to the class-II aminoacyl-tRNA synthetase family. As to quaternary structure, homodimer. The cofactor is Zn(2+).

The protein localises to the cytoplasm. It catalyses the reaction tRNA(Thr) + L-threonine + ATP = L-threonyl-tRNA(Thr) + AMP + diphosphate + H(+). In terms of biological role, catalyzes the attachment of threonine to tRNA(Thr) in a two-step reaction: L-threonine is first activated by ATP to form Thr-AMP and then transferred to the acceptor end of tRNA(Thr). Also edits incorrectly charged L-seryl-tRNA(Thr). The protein is Threonine--tRNA ligase of Acidovorax sp. (strain JS42).